Consider the following 500-residue polypeptide: Na(+)/H(+) antiporter NhaB (500 aa).

The next 12 membrane-spanning stretches (helical) occupy residues 28 to 50, 68 to 88, 98 to 118, 121 to 141, 145 to 165, 205 to 225, 244 to 264, 301 to 318, 350 to 370, 394 to 414, 449 to 469, and 477 to 497; these read FLLS…VLVG, GGLL…ALYA, LLLM…LLLF, LLLG…LAAL, FLDA…FFAV, LLMH…VGEP, QVAP…VALE, ALLV…GLAL, FQEA…VAVI, MLFI…VATI, VATP…IAPL, and MVWM…WAVS.

This sequence belongs to the NhaB Na(+)/H(+) (TC 2.A.34) antiporter family.

The protein localises to the cell inner membrane. The enzyme catalyses 2 Na(+)(in) + 3 H(+)(out) = 2 Na(+)(out) + 3 H(+)(in). Functionally, na(+)/H(+) antiporter that extrudes sodium in exchange for external protons. This chain is Na(+)/H(+) antiporter NhaB, found in Pseudomonas paraeruginosa (strain DSM 24068 / PA7) (Pseudomonas aeruginosa (strain PA7)).